Consider the following 462-residue polypeptide: Protein ultraspiracle homolog (462 aa).

Residues 1-113 (MSSVAKKDKR…NHPLSGSKHL (113 aa)) form a modulating region. 2 consecutive NR C4-type zinc fingers follow at residues 114–134 (CSIC…CEGC) and 150–174 (CRED…YQKC). Positions 114–179 (CSICGDRASG…RYQKCLACGM (66 aa)) form a DNA-binding region, nuclear receptor. Positions 180–201 (KREAVQEERQRAARRTEDAHPS) are hinge. The NR LBD domain occupies 204 to 453 (VQELSIERLL…SYIRDALCNH (250 aa)).

The protein belongs to the nuclear hormone receptor family. NR2 subfamily. Heterodimer of USP and ECR. In terms of tissue distribution, abundant expression seen in males and ovaries.

It localises to the nucleus. The polypeptide is Protein ultraspiracle homolog (USP) (Bombyx mori (Silk moth)).